The following is an 89-amino-acid chain: Small ribosomal subunit protein uS15 (89 aa).

The tract at residues 1-25 (MSLSAEQKGEIVKKHARTASDTGSP) is disordered.

Belongs to the universal ribosomal protein uS15 family. Part of the 30S ribosomal subunit. Forms a bridge to the 50S subunit in the 70S ribosome, contacting the 23S rRNA.

Functionally, one of the primary rRNA binding proteins, it binds directly to 16S rRNA where it helps nucleate assembly of the platform of the 30S subunit by binding and bridging several RNA helices of the 16S rRNA. In terms of biological role, forms an intersubunit bridge (bridge B4) with the 23S rRNA of the 50S subunit in the ribosome. This Alkalilimnicola ehrlichii (strain ATCC BAA-1101 / DSM 17681 / MLHE-1) protein is Small ribosomal subunit protein uS15.